Here is a 167-residue protein sequence, read N- to C-terminus: Large ribosomal subunit protein uL10 (167 aa).

It belongs to the universal ribosomal protein uL10 family. As to quaternary structure, part of the ribosomal stalk of the 50S ribosomal subunit. The N-terminus interacts with L11 and the large rRNA to form the base of the stalk. The C-terminus forms an elongated spine to which L12 dimers bind in a sequential fashion forming a multimeric L10(L12)X complex.

Its function is as follows. Forms part of the ribosomal stalk, playing a central role in the interaction of the ribosome with GTP-bound translation factors. This is Large ribosomal subunit protein uL10 from Mycoplasma mobile (strain ATCC 43663 / 163K / NCTC 11711) (Mesomycoplasma mobile).